Here is a 342-residue protein sequence, read N- to C-terminus: Dihydroorotate dehydrogenase (quinone) (342 aa).

FMN-binding positions include 61-65 and T85; that span reads AGLDK. K65 provides a ligand contact to substrate. 110–114 provides a ligand contact to substrate; the sequence is NRMGF. Residues N138 and N171 each contribute to the FMN site. N171 serves as a coordination point for substrate. S174 acts as the Nucleophile in catalysis. Substrate is bound at residue N176. K216 and T244 together coordinate FMN. 245 to 246 serves as a coordination point for substrate; that stretch reads NT. Residues G267, G296, and 317–318 each bind FMN; that span reads YS.

It belongs to the dihydroorotate dehydrogenase family. Type 2 subfamily. In terms of assembly, monomer. It depends on FMN as a cofactor.

It is found in the cell membrane. It catalyses the reaction (S)-dihydroorotate + a quinone = orotate + a quinol. Its pathway is pyrimidine metabolism; UMP biosynthesis via de novo pathway; orotate from (S)-dihydroorotate (quinone route): step 1/1. In terms of biological role, catalyzes the conversion of dihydroorotate to orotate with quinone as electron acceptor. The protein is Dihydroorotate dehydrogenase (quinone) of Pseudomonas aeruginosa (strain LESB58).